The sequence spans 166 residues: MFPMVTEFMNYGQQTVRAARYIGQGFIITLSHANRLPVTIQYPYEKLITSERFRGRIHFEFDKCIACEVCVRVCPIDLPVVDWKLETDIRKKRLLNYSIDFGICIFCGNCVEYCPTNCLSMTEEYELSTYDRHELNYNQIALGRLPMSIIDDYTIRTIFNLPEIKT.

2 consecutive 4Fe-4S ferredoxin-type domains span residues 55–84 (GRIH…VDWK) and 95–124 (LNYS…MTEE). Residues C64, C67, C70, C74, C104, C107, C110, and C114 each coordinate [4Fe-4S] cluster.

The protein belongs to the complex I 23 kDa subunit family. In terms of assembly, NDH is composed of at least 16 different subunits, 5 of which are encoded in the nucleus. It depends on [4Fe-4S] cluster as a cofactor.

The protein resides in the plastid. It localises to the chloroplast thylakoid membrane. It catalyses the reaction a plastoquinone + NADH + (n+1) H(+)(in) = a plastoquinol + NAD(+) + n H(+)(out). The catalysed reaction is a plastoquinone + NADPH + (n+1) H(+)(in) = a plastoquinol + NADP(+) + n H(+)(out). NDH shuttles electrons from NAD(P)H:plastoquinone, via FMN and iron-sulfur (Fe-S) centers, to quinones in the photosynthetic chain and possibly in a chloroplast respiratory chain. The immediate electron acceptor for the enzyme in this species is believed to be plastoquinone. Couples the redox reaction to proton translocation, and thus conserves the redox energy in a proton gradient. The chain is NAD(P)H-quinone oxidoreductase subunit I, chloroplastic from Calea megacephala.